We begin with the raw amino-acid sequence, 113 residues long: Protein RALF-like 31 (113 aa).

Residues 1–21 (MFNSTALVIFAILFLLISADA) form the signal peptide. Positions 22 to 58 (FPIPSPNGEIDAMLIRNSIIGEDEDLMPTEISRRVLM) are cleaved as a propeptide — removed in mature form. 2 disulfides stabilise this stretch: Cys-76/Cys-86 and Cys-98/Cys-104.

It belongs to the plant rapid alkalinization factor (RALF) family. Post-translationally, proteolytically cleaved, probably by S1P, a subtilisin-like serine protease (subtilase).

It localises to the secreted. Cell signaling peptide that may regulate plant stress, growth, and development. Mediates a rapid alkalinization of extracellular space by mediating a transient increase in the cytoplasmic Ca(2+) concentration leading to a calcium-dependent signaling events through a cell surface receptor and a concomitant activation of some intracellular mitogen-activated protein kinases. The polypeptide is Protein RALF-like 31 (RALFL31) (Arabidopsis thaliana (Mouse-ear cress)).